Reading from the N-terminus, the 613-residue chain is Epsin-2 (613 aa).

An ENTH domain is found at 11–143 (NMMKGYSSTQ…NDEERLREER (133 aa)). Disordered stretches follow at residues 140 to 208 (REER…DDED), 323 to 351 (TAAN…PFSM), and 356 to 375 (RQKQ…EARQ). Over residues 148–167 (RNRRANRAARPRPRRQRTRS) the composition is skewed to basic residues. Phosphothreonine is present on Thr165. Ser167 carries the post-translational modification Phosphoserine. UIM domains are found at residues 175–194 (SYQD…AQED) and 206–225 (DEDP…EELK). Residues 179 to 188 (DLEKALEESR) show a composition bias toward basic and acidic residues. Residues 323–339 (TAANMQQQQQQPADFQQ) are compositionally biased toward low complexity. The segment covering 340–350 (PLPTGSNNPFS) has biased composition (polar residues). A Glycyl lysine isopeptide (Lys-Gly) (interchain with G-Cter in ubiquitin) cross-link involves residue Lys426. Thr430 bears the Phosphothreonine mark. Ser434 carries the post-translational modification Phosphoserine. Thr450, Thr468, and Thr470 each carry phosphothreonine. The segment covering 471–512 (GTFINSQGTGYKQVTNEPKNNPFLSNQYTGLPSTNIVPTQTG) has biased composition (polar residues). The interval 471 to 613 (GTFINSQGTG…PDQGVSLIDL (143 aa)) is disordered. Residues 526 to 600 (SPQQNPTGIS…QQQQQQQQQQ (75 aa)) show a composition bias toward low complexity.

Belongs to the epsin family. In terms of processing, phosphorylated by PRK1.

The protein localises to the cytoplasm. Its subcellular location is the membrane. Binds to membranes enriched in phosphatidylinositol 3,5-bisphosphate (PtdIns(3,5)P2) and phosphatidylinositol 4,5-bisphosphate (PtdIns(4,5)P2). Required for endocytosis and localization of actin. The protein is Epsin-2 (ENT2) of Saccharomyces cerevisiae (strain ATCC 204508 / S288c) (Baker's yeast).